A 710-amino-acid polypeptide reads, in one-letter code: MADTTPEPCGQLMVHSDTHSDTVLASLEDQRKKGFLCDITLIVENVHFRAHKALLAASSEYFSMMFAEEGEIGQSIYMLEGMVADTFGILLEFIYTGYLHASEKTTEQILATAQFLKVYDLVKAYADFQDNHSAPKPPALNCTGTPVVVISNKKNDPLKRKRGRPRKANGLQEGRSELAAEGELQLRVNNSVQNRQNFVFKEEDSVKLSEQTPEDKESEPAGEPGSVEEVPAEKDENFDPKAGDGQESQSRCSRRRIRRSVKLKDYKLLGDEDDQSTAKRLCGRKKRSSGPEARCKDCDRVFKYSHFLAIHQRRHTGERPFKCNECGKGFAQKHSLQVHTRMHTGERPYTCTVCGKALTTKHSLLEHMSLHSGQKSFTCDQCGKYFSQKRQLKSHYRVHTGHSLPECSHCHRKFMDVSQLKKHLRTHTGEKPFTCEICGKSFTAKSSLQTHIRIHRGEKPYSCSICGKCFSDSSAKRRHCILHTGKKPFSCPECGLQFARLDNLKAHLKIHSKEKHTADSSSVSGSNVDEGRNILQLQPYQLSTSGEQEIQLLVTDSVHNINFMPGPSQGVSIVAAESPQSMATDPAANITLLTQQPEQLQGLILSAQQEQAEHIQSLSVIGGQMESSQTEPVHVITLSKETLEHLHAHQEQTTSSVPAADTGARATPVPSTRPGAELTQAPLAVPLDPSPGATVAGWPFGPSSYRSLKM.

Positions 37-103 constitute a BTB domain; that stretch reads CDITLIVENV…IYTGYLHASE (67 aa). 2 disordered regions span residues 134–176 and 202–256; these read APKP…EGRS and EEDS…SRRR. Residues 159–171 constitute a DNA-binding region (a.T hook); that stretch reads KRKRGRPRKANGL. Basic and acidic residues-rich tracts occupy residues 202–219 and 231–244; these read EEDS…KESE and PAEK…KAGD. C2H2-type zinc fingers lie at residues 293–315, 321–343, 349–371, 377–399, 405–427, 433–455, 461–483, and 489–511; these read ARCK…QRRH, FKCN…TRMH, YTCT…MSLH, FTCD…YRVH, PECS…LRTH, FTCE…IRIH, YSCS…CILH, and FSCP…LKIH. Residues 651–676 form a disordered region; that stretch reads EQTTSSVPAADTGARATPVPSTRPGA.

Belongs to the krueppel C2H2-type zinc-finger protein family. Interacts with MN1. As to expression, widely expressed. Highest level in liver, testis and kidney.

The protein localises to the nucleus. Its function is as follows. May be involved in BMP2-induced transcription. This Mus musculus (Mouse) protein is Zinc finger and BTB domain-containing protein 24 (Zbtb24).